A 187-amino-acid polypeptide reads, in one-letter code: UPF0301 protein VP2612 (187 aa).

It belongs to the UPF0301 (AlgH) family.

This chain is UPF0301 protein VP2612, found in Vibrio parahaemolyticus serotype O3:K6 (strain RIMD 2210633).